The chain runs to 430 residues: Isochorismate synthase MenF (430 aa).

The active-site Proton acceptor is the K187. The active-site Proton donor is the E237. 2 residues coordinate Mg(2+): E281 and E414.

It belongs to the isochorismate synthase family. The cofactor is Mg(2+).

It carries out the reaction chorismate = isochorismate. It functions in the pathway quinol/quinone metabolism; 1,4-dihydroxy-2-naphthoate biosynthesis; 1,4-dihydroxy-2-naphthoate from chorismate: step 1/7. It participates in quinol/quinone metabolism; menaquinone biosynthesis. Its function is as follows. Catalyzes the conversion of chorismate to isochorismate. This chain is Isochorismate synthase MenF, found in Haemophilus influenzae (strain ATCC 51907 / DSM 11121 / KW20 / Rd).